Consider the following 241-residue polypeptide: Protein TraL (241 aa).

The protein to plasmid R751 TraL.

In Escherichia coli, this protein is Protein TraL (traL).